Here is a 292-residue protein sequence, read N- to C-terminus: E3 ubiquitin-protein ligase RNF144A (292 aa).

Residues 16-236 (PLVSCKLCLG…YDKGPCRNKL (221 aa)) are TRIAD supradomain. 14 residues coordinate Zn(2+): Cys20, Cys23, Cys43, Cys46, Cys111, Cys116, Cys135, Cys138, Cys143, Cys146, His151, Cys156, Cys185, and Cys188. An RING-type 1 zinc finger spans residues 20–70 (CKLCLGEYPVEQMTTIAQCQCIFCTLCLKQYVELLIKEGLETAISCPDAAC). The IBR-type zinc finger occupies 91-156 (QRYKKLQFER…KASWHPGQGC (66 aa)). The segment at 185–214 (CPKCKVYIERDEGCAQMMCKNCKHAFCWYC) adopts an RING-type 2; atypical zinc-finger fold. Cys198 is an active-site residue. The Zn(2+) site is built by Cys203, Cys206, Cys211, Cys214, His226, and Cys232. A helical transmembrane segment spans residues 250 to 270 (VVGIFAGFGLLLLVASPFLLL).

The protein belongs to the RBR family. RNF144 subfamily. In terms of assembly, self-associates. Interacts with UBE2L3. In terms of processing, auto-ubiquitinated.

The protein resides in the cell membrane. The protein localises to the cytoplasmic vesicle membrane. Its subcellular location is the endosome membrane. It localises to the endoplasmic reticulum membrane. It carries out the reaction [E2 ubiquitin-conjugating enzyme]-S-ubiquitinyl-L-cysteine + [acceptor protein]-L-lysine = [E2 ubiquitin-conjugating enzyme]-L-cysteine + [acceptor protein]-N(6)-ubiquitinyl-L-lysine.. It participates in protein modification; protein ubiquitination. E3 ubiquitin-protein ligase which accepts ubiquitin from E2 ubiquitin-conjugating enzymes UBE2L3 and UBE2L6 in the form of a thioester and then directly transfers the ubiquitin to targeted substrates. Mediates the ubiquitination and degradation of the DNA damage kinase PRKDC during DNA damage. Positively regulates DNA virus or exogenous cytosolic DNA-triggered innate immune response by mediating STING1 ubiquitination and increasing its 'Lys-6'-linked ubiquitination and translocation from the endoplasmic reticulum to the Golgi leading to downstream signaling pathways. Plays a positive role in EGF-dependent cell proliferation by prolonging EGF/EGFR signaling during EGF stimulation through EGFR ubiquitination. Increases ERK activity independently of EGFR signaling by promoting polyubiquitination and subsequent degradation of VRK3 in the cytosol. The polypeptide is E3 ubiquitin-protein ligase RNF144A (RNF144A) (Homo sapiens (Human)).